The primary structure comprises 33 residues: DELTA-pseudomyrmecitoxin-Pp1a subunit B (33 aa).

In terms of assembly, heterodimer composed of subunit A and subunit B (DELTA-PSDTX-Pp1a); disulfide-linked. In terms of tissue distribution, expressed by the venom gland.

The protein localises to the secreted. In terms of biological role, this heterodimer has insecticidal and cytotoxic properties. Induces immediate paralysis when injected into blowflies (Lucilia cuprina), and then death within 24 hours. Also inhibits the growth of Aedes albopictus mosquito C6/36 cells. The chain is DELTA-pseudomyrmecitoxin-Pp1a subunit B from Pseudomyrmex penetrator (Ant).